The chain runs to 189 residues: FUN14 domain-containing protein 2 (189 aa).

Residues 1–80 (METSAPRAGS…GQESGPSAEK (80 aa)) lie on the Cytoplasmic side of the membrane. Ser-10 and Ser-53 each carry phosphoserine. A helical membrane pass occupies residues 81–101 (YSVATQLFIGGVTGWCTGFIF). Over 102–107 (QKVGKL) the chain is Mitochondrial intermembrane. The helical transmembrane segment at 108 to 128 (AATAVGGGFFLLQLANHTGYI) threads the bilayer. Topologically, residues 129–164 (KVDWQRVEKDMKKAKEQLKIRKSNQIPTEVRSKAEE) are cytoplasmic. The residue at position 151 (Ser-151) is a Phosphoserine. The helical transmembrane segment at 165 to 185 (VVSFVKKNVLVTGGFFGGFLL) threads the bilayer. Over 186-189 (GMAS) the chain is Mitochondrial intermembrane.

This sequence belongs to the FUN14 family. Highly expressed in platelets (at protein level).

It localises to the mitochondrion outer membrane. The protein resides in the nucleus. Functionally, binds directly and specifically 1,2-Diacyl-sn-glycero-3-phospho-(1'-myo-inositol-3',4',5'-bisphosphate) (PIP3) leading to the recruitment of PIP3 to mitochondria and may play a role in the regulation of the platelet activation via AKT/GSK3B/cGMP signaling pathways. May act as transcription factor that regulates SREBP1 (isoform SREBP-1C) expression in order to modulate triglyceride (TG) homeostasis in hepatocytes. The sequence is that of FUN14 domain-containing protein 2 from Homo sapiens (Human).